We begin with the raw amino-acid sequence, 151 residues long: GAVYLYNIGNLQCPNAVLQHMSIPQFLGEGTPVVFVRKSESDYGDVVRVMTVVYIKFFVKTTKLCVDQTVWKVNDEQLVVTGGKVGNENDIFKIMKTDLVTPGGSKYVYKLLHCPSHLGCKNIAGNFKNGYPRLVTVDDDKDFIPFVFIKA.

2 disulfide bridges follow: C13–C65 and C114–C120.

Belongs to the protease inhibitor I3 (leguminous Kunitz-type inhibitor) family.

The protein resides in the vacuole. In terms of biological role, inhibitor of cysteine proteases. May protect the plant by inhibiting proteases of invading organisms. The chain is Cysteine protease inhibitor 5 from Solanum tuberosum (Potato).